A 379-amino-acid polypeptide reads, in one-letter code: Chaperone protein DnaJ (379 aa).

In terms of domain architecture, J spans 5–70 (DYYEVLGLSK…EKKAMYDQYG (66 aa)). The CR-type zinc finger occupies 136-214 (GCKKDIRIHT…CHGDGRVHKA (79 aa)). Cys149, Cys152, Cys166, Cys169, Cys188, Cys191, Cys202, and Cys205 together coordinate Zn(2+). CXXCXGXG motif repeat units follow at residues 149–156 (CDTCHGTG), 166–173 (CSHCHGSG), 188–195 (CPSCHGTG), and 202–209 (CRSCHGDG).

It belongs to the DnaJ family. Homodimer. The cofactor is Zn(2+).

The protein localises to the cytoplasm. In terms of biological role, participates actively in the response to hyperosmotic and heat shock by preventing the aggregation of stress-denatured proteins and by disaggregating proteins, also in an autonomous, DnaK-independent fashion. Unfolded proteins bind initially to DnaJ; upon interaction with the DnaJ-bound protein, DnaK hydrolyzes its bound ATP, resulting in the formation of a stable complex. GrpE releases ADP from DnaK; ATP binding to DnaK triggers the release of the substrate protein, thus completing the reaction cycle. Several rounds of ATP-dependent interactions between DnaJ, DnaK and GrpE are required for fully efficient folding. Also involved, together with DnaK and GrpE, in the DNA replication of plasmids through activation of initiation proteins. The protein is Chaperone protein DnaJ of Mannheimia haemolytica (Pasteurella haemolytica).